The following is a 235-amino-acid chain: 7-carboxy-7-deazaguanine synthase (235 aa).

Substrate is bound by residues I25–G27 and R40. One can recognise a Radical SAM core domain in the interval F31–P235. [4Fe-4S] cluster-binding residues include C44, C48, and C51. T53 serves as a coordination point for Mg(2+). T85 provides a ligand contact to substrate. Residues G87 and S135 to K137 each bind S-adenosyl-L-methionine. P235 is a binding site for substrate.

Belongs to the radical SAM superfamily. 7-carboxy-7-deazaguanine synthase family. Homodimer. The cofactor is [4Fe-4S] cluster. It depends on S-adenosyl-L-methionine as a cofactor. Requires Mg(2+) as cofactor.

The enzyme catalyses 6-carboxy-5,6,7,8-tetrahydropterin + H(+) = 7-carboxy-7-deazaguanine + NH4(+). The protein operates within purine metabolism; 7-cyano-7-deazaguanine biosynthesis. Functionally, catalyzes the complex heterocyclic radical-mediated conversion of 6-carboxy-5,6,7,8-tetrahydropterin (CPH4) to 7-carboxy-7-deazaguanine (CDG), a step common to the biosynthetic pathways of all 7-deazapurine-containing compounds. In Hyperthermus butylicus (strain DSM 5456 / JCM 9403 / PLM1-5), this protein is 7-carboxy-7-deazaguanine synthase.